The following is a 335-amino-acid chain: L-tyrosine isonitrile synthase (335 aa).

It belongs to the isocyanide synthase family.

It carries out the reaction D-ribulose 5-phosphate + L-tyrosine = (2S)-3-(4-hydroxyphenyl)-2-isocyanopropanoate + hydroxyacetone + formaldehyde + phosphate + H2O + H(+). Its function is as follows. Involved in the biosynthesis of rhabduscin, a tyrosine derivative which is a potent inhibitor of phenoloxidase, a key component of the insect's innate immune system. Responsible for the synthesis of the isonitrile group on tyrosine using the C2 of ribulose 5-phosphate as the source of the carbon atom. This Xenorhabdus nematophila (strain ATCC 19061 / DSM 3370 / CCUG 14189 / LMG 1036 / NCIMB 9965 / AN6) protein is L-tyrosine isonitrile synthase.